We begin with the raw amino-acid sequence, 190 residues long: RING finger protein 227 (190 aa).

The RING-type zinc-finger motif lies at 18 to 81 (CNICYRPFNL…RRVVTCPFCR (64 aa)). The tract at residues 111–145 (KCERDEAGNPAKESSDADGEAEEEGESEKGAGPRS) is disordered. Acidic residues predominate over residues 126–136 (DADGEAEEEGE).

This is RING finger protein 227 from Homo sapiens (Human).